A 329-amino-acid chain; its full sequence is MCHQWLVLSWFSLVLLASPLMAIWELEKDVYVVELDWYPDAPGEMVVLTCNTPEEEGITWTSAQSNEVLGSGKTLTIQVKEFGDAGWYTCHKGGEVLSHSHLLLHKKEDGIWSTDILKDQKESKNKTFLKCEAKNYSGRFTCWWLTAISTDLKFSVKSSRGSSDPRGVTCGAATLSAERVSVDDREYKKYTVECQEGSACPAAEESLPIEIVVDAVHKLKYENYTSGFFIRDIIKPDPPKNLQLKPLKNSRQVEVSWEYPETWSTPHSYFSLTFSIQVQGKNKKERKDRLFMDETSATVTCHKDGQIRVQARDRYYSSSWSEWASVSCS.

Residues 1–22 (MCHQWLVLSWFSLVLLASPLMA) form the signal peptide. The Ig-like C2-type domain occupies 29–106 (DVYVVELDWY…LSHSHLLLHK (78 aa)). Cys50 and Cys90 are oxidised to a cystine. 3 N-linked (GlcNAc...) asparagine glycosylation sites follow: Asn125, Asn135, and Asn223. The Fibronectin type-III domain maps to 238–329 (PPKNLQLKPL…WSEWASVSCS (92 aa)).

The protein belongs to the IL-12B family. In terms of assembly, heterodimer with IL12A; disulfide-linked. The heterodimer is known as interleukin IL-12. Heterodimer with IL23A; disulfide-linked. The heterodimer is known as interleukin IL-23. Also secreted as a monomer. Interacts with NBR1; this interaction promotes IL-12 secretion.

It localises to the secreted. Its function is as follows. Cytokine that can act as a growth factor for activated T and NK cells, enhance the lytic activity of NK/lymphokine-activated killer cells, and stimulate the production of IFN-gamma by resting PBMC. In terms of biological role, associates with IL23A to form the IL-23 interleukin, a heterodimeric cytokine which functions in innate and adaptive immunity. IL-23 may constitute with IL-17 an acute response to infection in peripheral tissues. IL-23 binds to a heterodimeric receptor complex composed of IL12RB1 and IL23R, activates the Jak-Stat signaling cascade, stimulates memory rather than naive T-cells and promotes production of pro-inflammatory cytokines. IL-23 induces autoimmune inflammation and thus may be responsible for autoimmune inflammatory diseases and may be important for tumorigenesis. In Equus caballus (Horse), this protein is Interleukin-12 subunit beta (IL12B).